We begin with the raw amino-acid sequence, 380 residues long: Interleukin-13 receptor subunit alpha-2 (380 aa).

The N-terminal stretch at Met-1–Ser-26 is a signal peptide. Topologically, residues Asp-27–Arg-343 are extracellular. Fibronectin type-III domains follow at residues Pro-34–Gly-134, Lys-139–Ile-235, and Pro-240–Gly-333. The cysteines at positions 65 and 113 are disulfide-linked. N-linked (GlcNAc...) asparagine glycosylation occurs at Asn-115. Cystine bridges form between Cys-145-Cys-155 and Cys-184-Cys-197. N-linked (GlcNAc...) asparagine glycans are attached at residues Asn-215, Asn-290, and Asn-299. The cysteines at positions 269 and 316 are disulfide-linked. The WSXWS motif motif lies at Trp-322–Ser-326. A helical transmembrane segment spans residues Phe-344–Leu-363. At Arg-364–Thr-380 the chain is on the cytoplasmic side.

This sequence belongs to the type I cytokine receptor family. Type 5 subfamily. Interacts with IL4RA. Interacts with high affinity to interleukin-13 (IL13), but not to interleukin-4 (IL4). In terms of processing, cleaved by MMP8 leading to a soluble form that is also able to interact with IL13.

The protein localises to the cell membrane. In terms of biological role, cell surface receptor that plays a role in the regulation of IL-13-mediated responses. Functions as a decoy receptor that inhibits IL-13- and IL-4-mediated signal transduction via the JAK-STAT pathway and thereby modulates immune responses and inflammation. Serves as a functional signaling receptor for IL-13 in an alternative pathway involving AP-1 ultimately leading to the production of TGFB1. This chain is Interleukin-13 receptor subunit alpha-2 (IL13RA2), found in Homo sapiens (Human).